Reading from the N-terminus, the 245-residue chain is Balbiani ring A 28 kDa protein (245 aa).

A signal peptide spans methionine 1–serine 16. Serine 33, serine 40, serine 92, serine 93, and serine 115 each carry phosphoserine.

In terms of tissue distribution, salivary gland.

It localises to the secreted. Functionally, used by the larvae to construct a supramolecular structure, the larval tube. The sequence is that of Balbiani ring A 28 kDa protein from Chironomus thummi thummi (Midge).